The primary structure comprises 203 residues: Proteasome subunit beta 2 (203 aa).

Residues 1-9 constitute a propeptide, removed in mature form; by autocatalysis; it reads MGEEFQVGA. Catalysis depends on Thr-10, which acts as the Nucleophile.

Belongs to the peptidase T1B family. In terms of assembly, the 20S proteasome core is composed of 14 alpha and 14 beta subunits that assemble into four stacked heptameric rings, resulting in a barrel-shaped structure. The two inner rings, each composed of seven catalytic beta subunits, are sandwiched by two outer rings, each composed of seven alpha subunits. The catalytic chamber with the active sites is on the inside of the barrel. Has a gated structure, the ends of the cylinder being occluded by the N-termini of the alpha-subunits. Is capped at one or both ends by the proteasome regulatory ATPase, PAN.

Its subcellular location is the cytoplasm. The catalysed reaction is Cleavage of peptide bonds with very broad specificity.. The formation of the proteasomal ATPase PAN-20S proteasome complex, via the docking of the C-termini of PAN into the intersubunit pockets in the alpha-rings, triggers opening of the gate for substrate entry. Interconversion between the open-gate and close-gate conformations leads to a dynamic regulation of the 20S proteasome proteolysis activity. Its function is as follows. Component of the proteasome core, a large protease complex with broad specificity involved in protein degradation. This is Proteasome subunit beta 2 from Pyrobaculum neutrophilum (strain DSM 2338 / JCM 9278 / NBRC 100436 / V24Sta) (Thermoproteus neutrophilus).